A 464-amino-acid chain; its full sequence is FERM domain-containing protein 8 (464 aa).

Met-1 is modified (N-acetylmethionine). A disordered region spans residues 1–22 (MDGTEGSAGQPGPAERSHRSSV). The residue at position 24 (Ser-24) is a Phosphoserine. The 347-residue stretch at 30-376 (ADVLVYLADD…YCIELSQAAE (347 aa)) folds into the FERM domain. The disordered stretch occupies residues 376–408 (EPAGPQDSATGSPSDPSSSLAPVQRPKLRRQGS). 3 positions are modified to phosphoserine: Ser-383, Ser-387, and Ser-408. Residue Thr-419 is modified to Phosphothreonine. 2 positions are modified to phosphoserine: Ser-439 and Ser-446.

In terms of assembly, interacts with iRhom1/RHBDF1 and iRhom2/RHBDF2 (via cytoplasmic N-termini); this interaction leads to mutual protein stabilization. Interacts with ADAM17; this interaction is indirect and mediated by iRhom proteins. Interacts with LRP6; this interaction affects LRP6-binding to AXIN1. As to expression, widely expressed, with high expression in heart and spleen.

It is found in the cytoplasm. The protein localises to the cytosol. It localises to the cell membrane. Promotes the cell surface stability of iRhom1/RHBDF1 and iRhom2/RHBDF2 and prevents their degradation via the endolysosomal pathway. By acting on iRhoms, involved in ADAM17-mediated shedding of TNF, amphiregulin/AREG, HBEGF and TGFA from the cell surface. Negatively regulates Wnt signaling, possibly by antagonizing the recruitment of AXIN1 to LRP6. The chain is FERM domain-containing protein 8 (FRMD8) from Homo sapiens (Human).